Reading from the N-terminus, the 200-residue chain is MTSFLIASNILLWLAFLGVTVVMLGLMRQVGLLHERSSPMGAMITDHGPDIGDAAPEFELPDFFGRPVRIGGAEAQGRQTLLMFTAPSCPVCDKLFPIIKSIGRAEGINVVMISDGAPEEHRRFLDSHELGEMRYVVSAEAGMAFQVGKIPYGVLLDGQGIIRAKGLTNTREHLESLLEADRTGFASLQQYMASRKKQAA.

Residues 4-24 form a helical membrane-spanning segment; it reads FLIASNILLWLAFLGVTVVML. The region spanning 49–183 is the Thioredoxin domain; it reads PDIGDAAPEF…LESLLEADRT (135 aa).

It is found in the membrane. It functions in the pathway one-carbon metabolism; methylamine degradation. Its function is as follows. May be specifically involved in the processing, transport, and/or maturation of the MADH beta-subunit. The chain is Methylamine utilization protein MauD (mauD) from Paracoccus denitrificans.